The primary structure comprises 198 residues: Probable chemoreceptor glutamine deamidase CheD (198 aa).

This sequence belongs to the CheD family.

The catalysed reaction is L-glutaminyl-[protein] + H2O = L-glutamyl-[protein] + NH4(+). Its function is as follows. Probably deamidates glutamine residues to glutamate on methyl-accepting chemotaxis receptors (MCPs), playing an important role in chemotaxis. In Stenotrophomonas maltophilia (strain K279a), this protein is Probable chemoreceptor glutamine deamidase CheD.